The chain runs to 703 residues: Polyribonucleotide nucleotidyltransferase (703 aa).

Mg(2+)-binding residues include aspartate 488 and aspartate 494. The KH domain occupies 555 to 614 (PRLYVMKINPEKIRDVIGKGGAVIRALTEETGTQINIEEDGTITIASNDSAKADEAKRRI). In terms of domain architecture, S1 motif spans 624–692 (GKVYEGAITK…EKGRVKLSMK (69 aa)).

This sequence belongs to the polyribonucleotide nucleotidyltransferase family. Requires Mg(2+) as cofactor.

Its subcellular location is the cytoplasm. The enzyme catalyses RNA(n+1) + phosphate = RNA(n) + a ribonucleoside 5'-diphosphate. Involved in mRNA degradation. Catalyzes the phosphorolysis of single-stranded polyribonucleotides processively in the 3'- to 5'-direction. The sequence is that of Polyribonucleotide nucleotidyltransferase from Polaromonas naphthalenivorans (strain CJ2).